Consider the following 307-residue polypeptide: Putative F-box protein PP2-B6 (307 aa).

An F-box domain is found at 42–88; it reads HSPFDDLPEDCISNIISFTSPRDVCVSASVSKSFAHAVQCDSIWEKF.

The polypeptide is Putative F-box protein PP2-B6 (PP2B6) (Arabidopsis thaliana (Mouse-ear cress)).